Reading from the N-terminus, the 734-residue chain is Photosystem I P700 chlorophyll a apoprotein A2 (734 aa).

The next 8 helical transmembrane spans lie at 46–69, 135–158, 175–199, 273–291, 330–353, 369–395, 417–439, and 517–535; these read IFAS…FHVA, LYTG…LHLQ, LNHH…HVAI, MAHH…GHMY, IHFQ…QHMY, AALY…IFFI, AIIS…LYVH, and FLVH…LILV. The [4Fe-4S] cluster site is built by Cys-559 and Cys-568. The next 2 helical transmembrane spans lie at 575–596 and 643–665; these read AFYL…YWHW and LSVW…MFLI. The chlorophyll a site is built by His-654, Met-662, and Tyr-670. Trp-671 lines the phylloquinone pocket. The chain crosses the membrane as a helical span at residues 707-727; the sequence is LVGLAHFSVGYIFTYAAFLIA.

The protein belongs to the PsaA/PsaB family. As to quaternary structure, the PsaA/B heterodimer binds the P700 chlorophyll special pair and subsequent electron acceptors. PSI consists of a core antenna complex that captures photons, and an electron transfer chain that converts photonic excitation into a charge separation. The eukaryotic PSI reaction center is composed of at least 11 subunits. It depends on P700 is a chlorophyll a/chlorophyll a' dimer, A0 is one or more chlorophyll a, A1 is one or both phylloquinones and FX is a shared 4Fe-4S iron-sulfur center. as a cofactor.

It is found in the plastid. Its subcellular location is the chloroplast thylakoid membrane. It catalyses the reaction reduced [plastocyanin] + hnu + oxidized [2Fe-2S]-[ferredoxin] = oxidized [plastocyanin] + reduced [2Fe-2S]-[ferredoxin]. Its function is as follows. PsaA and PsaB bind P700, the primary electron donor of photosystem I (PSI), as well as the electron acceptors A0, A1 and FX. PSI is a plastocyanin-ferredoxin oxidoreductase, converting photonic excitation into a charge separation, which transfers an electron from the donor P700 chlorophyll pair to the spectroscopically characterized acceptors A0, A1, FX, FA and FB in turn. Oxidized P700 is reduced on the lumenal side of the thylakoid membrane by plastocyanin. This chain is Photosystem I P700 chlorophyll a apoprotein A2, found in Arabidopsis thaliana (Mouse-ear cress).